The primary structure comprises 469 residues: 3-isopropylmalate dehydratase large subunit (469 aa).

Cysteine 349, cysteine 410, and cysteine 413 together coordinate [4Fe-4S] cluster.

This sequence belongs to the aconitase/IPM isomerase family. LeuC type 1 subfamily. As to quaternary structure, heterodimer of LeuC and LeuD. [4Fe-4S] cluster is required as a cofactor.

The enzyme catalyses (2R,3S)-3-isopropylmalate = (2S)-2-isopropylmalate. It functions in the pathway amino-acid biosynthesis; L-leucine biosynthesis; L-leucine from 3-methyl-2-oxobutanoate: step 2/4. Catalyzes the isomerization between 2-isopropylmalate and 3-isopropylmalate, via the formation of 2-isopropylmaleate. This chain is 3-isopropylmalate dehydratase large subunit, found in Aromatoleum aromaticum (strain DSM 19018 / LMG 30748 / EbN1) (Azoarcus sp. (strain EbN1)).